The sequence spans 183 residues: Transcription termination/antitermination protein NusG (183 aa).

The KOW domain maps to 131–161; it reads PGEEVRVTEGPFADFNGTVEEVDYEKGRLKV.

The protein belongs to the NusG family.

In terms of biological role, participates in transcription elongation, termination and antitermination. This Pasteurella multocida (strain Pm70) protein is Transcription termination/antitermination protein NusG.